We begin with the raw amino-acid sequence, 651 residues long: Cytoplasmic tyrosine-protein kinase BMX (651 aa).

In terms of domain architecture, PH spans 4-111 (KSILEELLLK…WLKALQKEIR (108 aa)). The Btk-type zinc finger occupies 113 to 149 (NPHLLIKYHSGFFVDGKFLCCQQSCKAAPGCTLWEAY). Residues H121, C132, C133, and C143 each coordinate Zn(2+). One can recognise an SH2 domain in the interval 272-368 (WFAGNISRSQ…GMITRLRHPV (97 aa)). The Protein kinase domain maps to 393–646 (ITLLKELGNG…QLLSAIEPLR (254 aa)). ATP contacts are provided by residues 399-407 (LGNGQFGVV) and K421. Catalysis depends on D512, which acts as the Proton acceptor. The residue at position 542 (Y542) is a Phosphotyrosine; by SRC and autocatalysis.

The protein belongs to the protein kinase superfamily. Tyr protein kinase family. TEC subfamily. In terms of assembly, interacts with BCAR1, CAV1, MYD88, PTK2/FAK1, RUFY1, RUFY2, STAT3, TIRAP and TNFRSF1B. The cofactor is Zn(2+). Phosphorylated in response to protein I/II and to LPS. Phosphorylation at Tyr-542 by SRC and by autocatalysis leads to activation and is required for STAT3 phosphorylation by BMX. As to expression, specifically expressed in the endocardium of the developing heart as well as in the endocardium of the left ventricle and in the endothelium of large arteries in adult mice.

It localises to the cytoplasm. It carries out the reaction L-tyrosyl-[protein] + ATP = O-phospho-L-tyrosyl-[protein] + ADP + H(+). TEK and vascular endothelial growth factor receptor 1 (FLT1) stimulate BMX tyrosine kinase activity. Activated by integrins through the mediation of PTK2/FAK1. Activated by TNF through the mediation of TNFRSF1B. Non-receptor tyrosine kinase that plays central but diverse modulatory roles in various signaling processes involved in the regulation of actin reorganization, cell migration, cell proliferation and survival, cell adhesion, and apoptosis. Participates in signal transduction stimulated by growth factor receptors, cytokine receptors, G-protein coupled receptors, antigen receptors and integrins. Induces tyrosine phosphorylation of BCAR1 in response to integrin regulation. Activation of BMX by integrins is mediated by PTK2/FAK1, a key mediator of integrin signaling events leading to the regulation of actin cytoskeleton and cell motility. Plays a critical role in TNF-induced angiogenesis, and implicated in the signaling of TEK and FLT1 receptors, 2 important receptor families essential for angiogenesis. Required for the phosphorylation and activation of STAT3, a transcription factor involved in cell differentiation. Also involved in interleukin-6 (IL6) induced differentiation. Also plays a role in programming adaptive cytoprotection against extracellular stress in different cell systems, salivary epithelial cells, brain endothelial cells, and dermal fibroblasts. May be involved in regulation of endocytosis through its interaction with an endosomal protein RUFY1. May also play a role in the growth and differentiation of hematopoietic cells; as well as in signal transduction in endocardial and arterial endothelial cells. The sequence is that of Cytoplasmic tyrosine-protein kinase BMX (Bmx) from Mus musculus (Mouse).